Consider the following 96-residue polypeptide: Protein RnfH (96 aa).

It belongs to the UPF0125 (RnfH) family.

The sequence is that of Protein RnfH from Escherichia coli O17:K52:H18 (strain UMN026 / ExPEC).